The following is a 464-amino-acid chain: Uronate isomerase (464 aa).

The protein belongs to the metallo-dependent hydrolases superfamily. Uronate isomerase family.

The catalysed reaction is D-glucuronate = D-fructuronate. It catalyses the reaction aldehydo-D-galacturonate = keto-D-tagaturonate. It functions in the pathway carbohydrate metabolism; pentose and glucuronate interconversion. This Caldicellulosiruptor saccharolyticus (strain ATCC 43494 / DSM 8903 / Tp8T 6331) protein is Uronate isomerase.